We begin with the raw amino-acid sequence, 105 residues long: U2-lycotoxin-Ls1d (105 aa).

The first 17 residues, 1 to 17 (MIKYVLISALLVVAVYS), serve as a signal peptide directing secretion. A propeptide spanning residues 18 to 41 (FTIEDNEDALLEEAEDELDTEEER) is cleaved from the precursor. 4 disulfide bridges follow: Cys-51–Cys-67, Cys-58–Cys-97, Cys-60–Cys-83, and Cys-69–Cys-81.

It belongs to the neurotoxin 04 (omega-agtx) family. 01 (type I omega-agtx) subfamily. In terms of tissue distribution, expressed by the venom gland.

It is found in the secreted. Its function is as follows. Insecticidal to house crickets. It induces an excitatory slow-onset impact that leads to irreversible spastic paralysis. It also modifies human voltage-gated potassium channel Kv1.5/KCNA5. Most likely, it binds to the voltage-sensing domain of the channel, suggesting it does not block the pore but prevents its opening at physiological membrane potentials. The recombinant peptide binds to the channel in an irreversible manner and slows down the hKv1.5 current activation kinetics. It is not toxic to mice, when intracranially injected (at 0.5 ug/g mouse). This Lycosa singoriensis (Wolf spider) protein is U2-lycotoxin-Ls1d.